A 157-amino-acid polypeptide reads, in one-letter code: Small ribosomal subunit protein uS7 (157 aa).

It belongs to the universal ribosomal protein uS7 family. Part of the 30S ribosomal subunit. Contacts proteins S9 and S11.

One of the primary rRNA binding proteins, it binds directly to 16S rRNA where it nucleates assembly of the head domain of the 30S subunit. Is located at the subunit interface close to the decoding center, probably blocks exit of the E-site tRNA. This is Small ribosomal subunit protein uS7 from Borrelia garinii subsp. bavariensis (strain ATCC BAA-2496 / DSM 23469 / PBi) (Borreliella bavariensis).